The following is a 360-amino-acid chain: G-protein coupled receptor 15 (360 aa).

Residues 1–33 (MDPEETSVYLDYYYATSPNPDIRETHSHVPYTS) lie on the Extracellular side of the membrane. Residues 34–54 (VFLPVFYIAVFLTGVLGNLVL) traverse the membrane as a helical segment. The Cytoplasmic segment spans residues 55–69 (MGALHFKPGSRRLID). Residues 70–90 (IFIINLAASDFIFLVTLPLWV) traverse the membrane as a helical segment. Over 91 to 120 (DKEASLGLWRTGSFLCKGSSYMISVNMHCS) the chain is Extracellular. A helical membrane pass occupies residues 121–141 (VFLLTCMSVDRYLAIVCPVVS). Residues 142 to 149 (RKFRRTDC) are Cytoplasmic-facing. The chain crosses the membrane as a helical span at residues 150–170 (AYVVCASIWFISCLLGLPTLL). At 171 to 192 (SRELTLIDDKPYCAEKKATPLK) the chain is on the extracellular side. Residues 193–213 (LIWSLVALIFTFFVPLLSIVT) form a helical membrane-spanning segment. Over 214–239 (CYCRIARKLCAHYQQSGKHNKKLKKS) the chain is Cytoplasmic. A helical membrane pass occupies residues 240 to 260 (IKIIFIVVAAFLVSWLPFNTS). Over 261 to 284 (KLLAIVSGLQQERYFPSAILQLGM) the chain is Extracellular. A helical membrane pass occupies residues 285–305 (EVSGPLAFANSCVNPFIYYIF). Residues 306-360 (DSYIRRAIVHCLCPCLKNYDFGSSTETSDSHLTKALSTFIHAEDFTRRRKRSVSL) lie on the Cytoplasmic side of the membrane. Ser-359 bears the Phosphoserine mark.

Belongs to the G-protein coupled receptor 1 family. Interacts with adapter YWHAE; this interaction promotes ER-to-Golgi transport of GPR15. In terms of processing, phosphorylation is necessary for YWHAE binding and efficient surface expression. O-glycosylated. Sialylated O-glycans in the N-terminal tail inhibits binding of GPR15LG. Post-translationally, sulfation is required for efficient binding of GPR15LG.

It localises to the cell membrane. Functionally, g protein-coupled receptor that plays an important role in immune homeostasis. Acts via its natural ligand GPR15LG, a chemokine-like polypeptide strongly expressed in gastrointestinal tissues. GPR15-GPR15LG signaling axis regulates intestinal homeostasis and inflammation through the migration of immune cells. Controls thereby the specific homing of T-cells, particularly FOXP3+ regulatory T-cells (Tregs), to the large intestine lamina propria. Also required for skin localization of thymus-derived dendritic epidermal T-cells. Plays an important role in mediating cytoprotective function as well as angiogenesis of thrombomodulin. Mechanistically, preferentially signals through the Gi/o pathway to inhibit adenylate cyclase activity and activate a phosphatidylinositol-calcium second messenger system that regulates the release of Ca(2+) ions from intracellular stores. This is G-protein coupled receptor 15 (GPR15) from Chlorocebus aethiops (Green monkey).